The sequence spans 443 residues: Tubulin beta chain (443 aa).

GTP-binding residues include Q11, E69, S138, G142, T143, G144, N204, and N226. E69 lines the Mg(2+) pocket.

This sequence belongs to the tubulin family. Dimer of alpha and beta chains. A typical microtubule is a hollow water-filled tube with an outer diameter of 25 nm and an inner diameter of 15 nM. Alpha-beta heterodimers associate head-to-tail to form protofilaments running lengthwise along the microtubule wall with the beta-tubulin subunit facing the microtubule plus end conferring a structural polarity. Microtubules usually have 13 protofilaments but different protofilament numbers can be found in some organisms and specialized cells. The cofactor is Mg(2+).

Its subcellular location is the cytoplasm. The protein localises to the cytoskeleton. Functionally, tubulin is the major constituent of microtubules, a cylinder consisting of laterally associated linear protofilaments composed of alpha- and beta-tubulin heterodimers. Microtubules grow by the addition of GTP-tubulin dimers to the microtubule end, where a stabilizing cap forms. Below the cap, tubulin dimers are in GDP-bound state, owing to GTPase activity of alpha-tubulin. This Thalassiosira weissflogii (Marine diatom) protein is Tubulin beta chain.